The following is a 334-amino-acid chain: Small ribosomal subunit protein RACK1z (334 aa).

WD repeat units follow at residues 16–47, 73–103, 115–145, 163–195, 207–237, 248–277, and 296–326; these read GHNDVVTAIATPIDNSPFIVSSSRDKSLLVWD, GHSHFVQDVVLSSDGQFALSGSWDGELRLWD, GHDKDVLSVAFSVDNRQIVSASRDRTIKLWN, GHNGWVSCVRFSPNTFQPTIVSGSWDRTVKVWN, GHGGYVNAVAVSPDGSLCASGGKDGVTLLWD, DAGSIIHSLCFSPNRYWLCAATQDSIKIWD, and NQMLYCTSLNWSADGSTLYAGYTDGTIRIYK.

Belongs to the WD repeat G protein beta family. Ribosomal protein RACK1 subfamily. In terms of assembly, interacts with RAC1, RAC3, RAC6, RAR1, SGT1 and RBOHB. Homodimer and heterodimer with RACK1B. In terms of tissue distribution, widely expressed.

It localises to the cytoplasm. Its subcellular location is the cell membrane. Its function is as follows. Component of the RACK1 regulatory proteins that functions in innate immunity by interacting with multiple proteins in the RAC1 immune complex. Acts as a positive regulator of reactive oxygen species (ROS) production and is required for resistance against rice blast (M.grisea) infection. This Oryza sativa subsp. japonica (Rice) protein is Small ribosomal subunit protein RACK1z (RACK1A).